We begin with the raw amino-acid sequence, 198 residues long: Glycerol-3-phosphate acyltransferase (198 aa).

The next 5 membrane-spanning stretches (helical) occupy residues 2–22 (YAVL…AYIL), 48–70 (LGYK…AVLI), 75–97 (MGNT…PVFL), 111–131 (VVMT…VTVI), and 154–174 (IFWN…LAIF).

This sequence belongs to the PlsY family. In terms of assembly, probably interacts with PlsX.

It localises to the cell membrane. It catalyses the reaction an acyl phosphate + sn-glycerol 3-phosphate = a 1-acyl-sn-glycero-3-phosphate + phosphate. Its pathway is lipid metabolism; phospholipid metabolism. In terms of biological role, catalyzes the transfer of an acyl group from acyl-phosphate (acyl-PO(4)) to glycerol-3-phosphate (G3P) to form lysophosphatidic acid (LPA). This enzyme utilizes acyl-phosphate as fatty acyl donor, but not acyl-CoA or acyl-ACP. The chain is Glycerol-3-phosphate acyltransferase from Thermoanaerobacter pseudethanolicus (strain ATCC 33223 / 39E) (Clostridium thermohydrosulfuricum).